The primary structure comprises 110 residues: U32-theraphotoxin-Cg1a (110 aa).

Positions M1–S19 are cleaved as a signal peptide. Positions L20–R43 are excised as a propeptide. Cystine bridges form between C49/C63, C56/C69, C60/C105, and C62/C80.

Belongs to the neurotoxin 03 (Tx2) family. 02 subfamily. As to expression, expressed by the venom gland.

It is found in the secreted. Its function is as follows. Probable ion channel inhibitor. The chain is U32-theraphotoxin-Cg1a from Chilobrachys guangxiensis (Chinese earth tiger tarantula).